Consider the following 99-residue polypeptide: MATYQVRLINKKEDLDSTIEIDEDTTILEGAAENGIELPFSCHSGSCSSCVGKVVEGEVDQSDQIFLDDEQMSKGFALLCVTYPRSNCTIKTHQEPYLV.

The 2Fe-2S ferredoxin-type domain occupies 4–96 (YQVRLINKKE…NCTIKTHQEP (93 aa)). [2Fe-2S] cluster is bound by residues cysteine 42, cysteine 47, cysteine 50, and cysteine 80.

Belongs to the 2Fe2S plant-type ferredoxin family. [2Fe-2S] cluster is required as a cofactor.

Ferredoxins are iron-sulfur proteins that transfer electrons in a wide variety of metabolic reactions. In Microchaete diplosiphon (Fremyella diplosiphon), this protein is Ferredoxin, heterocyst (fdxH).